A 556-amino-acid chain; its full sequence is MSLIATVGPTGGVKNRLNIVDFVKNEKFFTLYVRSLELLQAKEQHDYSSFFQLAGIHGLPFTEWAKERPSMNLYKAGYCTHGQVLFPTWHRTYLSVLEQILQGAAIEVAKKFTSNQTDWVQAAQDLRQPYWDWGFELMPPDEVIKNEEVNITNYDGKKISVKNPILRYHFHPIDPSFKPYGDFATWRTTVRNPDRNRREDIPGLIKKMRLEEGQIREKTYNMLKFNDAWERFSNHGISDDQHANSLESVHDDIHVMVGYGKIEGHMDHPFFAAFDPIFWLHHTNVDRLLSLWKAINPDVWVTSGRNRDGTMGIAPNAQINSETPLEPFYQSGDKVWTSASLADTARLGYSYPDFDKLVGGTKELIRDAIDDLIDERYGSKPSSGARNTAFDLLADFKGITKEHKEDLKMYDWTIHVAFKKFELKESFSLLFYFASDGGDYDQENCFVGSINAFRGTAPETCANCQDNENLIQEGFIHLNHYLARDLESFEPQDVHKFLKEKGLSYKLYSRGDKPLTSLSVKIEGRPLHLPPGEHRPKYDHTQARVVFDDVAVHVIN.

Positions 57, 81, 90, 250, 254, and 282 each coordinate Cu cation. Positions 79-81 form a cross-link, 2'-(S-cysteinyl)-histidine (Cys-His); sequence CTH. Histidine 254 provides a ligand contact to substrate. A propeptide spans 379 to 556 (removed in mature form); the sequence is SKPSSGARNT…FDDVAVHVIN (178 aa).

It belongs to the tyrosinase family. Heterotetramer. Cu(2+) is required as a cofactor. The C-ter is probably cleaved after Gly-378 since the mature active protein is smaller than the protein encoded by the gene.

The enzyme catalyses 2 L-dopa + O2 = 2 L-dopaquinone + 2 H2O. It carries out the reaction L-tyrosine + O2 = L-dopaquinone + H2O. Copper-containing oxidase that catalyzes both the o-hydroxylation of monophenols and the subsequent oxidation of the resulting o-diphenols into reactive o-quinones, which evolve spontaneously to produce intermediates, which associate in dark brown pigments. Involved in the initial step of melanin synthesis. Melanins constitute a mechanism of defense and resistance to stress such as UV radiations, free radicals, gamma rays, dehydratation and extreme temperatures, and contribute to the fungal cell-wall resistance against hydrolytic enzymes in avoiding cellular lysis. Fungal pigments are also involved in the formation and stability of spores. The sequence is that of Polyphenol oxidase 2 (PPO2) from Agaricus bisporus (White button mushroom).